We begin with the raw amino-acid sequence, 291 residues long: METISTIAALRERLAAYRRAGKSIGLVPTMGYLHAGHMELVSRARAENDIVVVSIFVNPLQFGANEDLAKYPRDLERDSAILRDGKVDFIFAPGVADMYPRPMETVVDVPKLGTELEGAVRPGHFAGVATVVTKLFNIVQPDSAYFGEKDYQQVAIIRRMVEDLAQPVRVVPVPTVRDADGLALSSRNVYLSTEQRAAAVIVPKALAEAERLYNEGADDPIAFEAALRDFIASEPFATPEVTAVRHPDTLEPLTNLQGQPILVALFVRIGATRLLDNRVVGRKQASSDKAA.

30–37 contributes to the ATP binding site; sequence MGYLHAGH. His37 acts as the Proton donor in catalysis. (R)-pantoate is bound at residue Gln61. Gln61 is a binding site for beta-alanine. 147 to 150 serves as a coordination point for ATP; sequence GEKD. Gln153 contributes to the (R)-pantoate binding site. Residues Val176 and 184–187 contribute to the ATP site; that span reads LSSR.

The protein belongs to the pantothenate synthetase family. In terms of assembly, homodimer.

It is found in the cytoplasm. The enzyme catalyses (R)-pantoate + beta-alanine + ATP = (R)-pantothenate + AMP + diphosphate + H(+). The protein operates within cofactor biosynthesis; (R)-pantothenate biosynthesis; (R)-pantothenate from (R)-pantoate and beta-alanine: step 1/1. In terms of biological role, catalyzes the condensation of pantoate with beta-alanine in an ATP-dependent reaction via a pantoyl-adenylate intermediate. The chain is Pantothenate synthetase from Rhizobium rhizogenes (strain K84 / ATCC BAA-868) (Agrobacterium radiobacter).